The sequence spans 233 residues: Small ribosomal subunit protein uS3 (233 aa).

In terms of domain architecture, KH type-2 spans 39-107; the sequence is VRQFLTKELS…PAQINTYEIR (69 aa).

The protein belongs to the universal ribosomal protein uS3 family. In terms of assembly, part of the 30S ribosomal subunit. Forms a tight complex with proteins S10 and S14.

Binds the lower part of the 30S subunit head. Binds mRNA in the 70S ribosome, positioning it for translation. This Hamiltonella defensa subsp. Acyrthosiphon pisum (strain 5AT) protein is Small ribosomal subunit protein uS3.